The chain runs to 824 residues: Acyl-homoserine lactone acylase QuiP (824 aa).

An N-terminal signal peptide occupies residues 1–26 (MASPALRHFLPRFGAAAAAASFLSLA). S264 serves as the catalytic Nucleophile.

This sequence belongs to the peptidase S45 family. In terms of assembly, heterodimer of an alpha subunit and a beta subunit processed from the same precursor.

Its subcellular location is the periplasm. It catalyses the reaction an N-acyl-L-homoserine lactone + H2O = L-homoserine lactone + a carboxylate. Its function is as follows. Catalyzes the deacylation of acyl-homoserine lactone (AHL or acyl-HSL), releasing homoserine lactone (HSL) and the corresponding fatty acid. Possesses a specificity for the degradation of long-chain acyl-HSLs (side chains of seven or more carbons in length). The sequence is that of Acyl-homoserine lactone acylase QuiP (quiP) from Pseudomonas syringae pv. syringae (strain B728a).